The sequence spans 153 residues: MAHLVWQDDLNTGIQVIDNQHKRIVEMINHLHDAQQGKEHAAIAEVIEELVDYTLSHFAFEETLMEDAGYQFSRAHKKIHELFIRRVSEYRVRFQAGEDVGDELKGLLSRWLFNHIRNDDAGYVDAVRHSMSELVKDKSEGGWLSRSMKRFFG.

Residues H21, H57, E61, H76, H80, H115, and D120 each contribute to the Fe cation site.

Belongs to the hemerythrin family. As to quaternary structure, monomer.

In terms of biological role, oxygen-binding protein. May be involved in a storage mechanism or for delivery to oxygen-requiring enzymes. The oxygen-binding site contains two iron atoms. This chain is Bacteriohemerythrin, found in Pseudomonas aeruginosa (strain UCBPP-PA14).